We begin with the raw amino-acid sequence, 604 residues long: Ectonucleoside triphosphate diphosphohydrolase 7 (604 aa).

The Cytoplasmic segment spans residues 1-28 (MARISFSYLCPASWYFTVPTVSPFLRQR). The helical transmembrane segment at 29-49 (VAFLGLFFISCLLLLMLIIDF) threads the bilayer. At 50-546 (RHWSASLPRD…QAHGSWFRLS (497 aa)) the chain is on the vesicular side. Glu217 serves as the catalytic Proton acceptor. Asn330 carries N-linked (GlcNAc...) asparagine glycosylation. Cys448 and Cys477 are disulfide-bonded. Residues 547–567 (FVYNHYLFFACILVVLLAIVL) traverse the membrane as a helical segment. Residues 568 to 604 (YLLRLRRIHHRQTRASAPLDLLWLEEVVPMMGVQVGP) lie on the Cytoplasmic side of the membrane.

The protein belongs to the GDA1/CD39 NTPase family. Ca(2+) serves as cofactor. The cofactor is Mg(2+).

It is found in the cytoplasmic vesicle membrane. The catalysed reaction is a ribonucleoside 5'-triphosphate + H2O = a ribonucleoside 5'-diphosphate + phosphate + H(+). It catalyses the reaction UTP + H2O = UDP + phosphate + H(+). The enzyme catalyses GTP + H2O = GDP + phosphate + H(+). It carries out the reaction CTP + H2O = CDP + phosphate + H(+). In terms of biological role, catalyzes the hydrolysis of nucleoside triphosphates and diphosphates in a calcium- or magnesium-dependent manner. Preferentially hydrolyzes nucleoside 5'-triphosphates, with substrate preference for UTP &gt; GTP &gt; CTP. Hydrolyzes ATP and nucleoside diphosphates only to a minor extent. This Pongo abelii (Sumatran orangutan) protein is Ectonucleoside triphosphate diphosphohydrolase 7 (ENTPD7).